We begin with the raw amino-acid sequence, 371 residues long: Spermidine/putrescine import ATP-binding protein PotA (371 aa).

Positions 10–240 (VELRNVTKSY…PKNLFVARFI (231 aa)) constitute an ABC transporter domain. Position 42-49 (42-49 (GPSGCGKT)) interacts with ATP.

Belongs to the ABC transporter superfamily. Spermidine/putrescine importer (TC 3.A.1.11.1) family. As to quaternary structure, the complex is composed of two ATP-binding proteins (PotA), two transmembrane proteins (PotB and PotC) and a solute-binding protein (PotD).

It is found in the cell inner membrane. The enzyme catalyses ATP + H2O + polyamine-[polyamine-binding protein]Side 1 = ADP + phosphate + polyamineSide 2 + [polyamine-binding protein]Side 1.. Its function is as follows. Part of the ABC transporter complex PotABCD involved in spermidine/putrescine import. Responsible for energy coupling to the transport system. This Haemophilus ducreyi (strain 35000HP / ATCC 700724) protein is Spermidine/putrescine import ATP-binding protein PotA.